The following is a 488-amino-acid chain: Stress activated transcription factor atfs-1 (488 aa).

Residues 1-23 constitute a mitochondrion transit peptide; it reads MFSRVGRLTTFGAQAVSNCPFRR. The interval 138-191 is disordered; it reads SWQNGSSVGHPHGHQQQQQTCQQPPTHSSTTETMHDFSNFGDNMGSPLFQSPSK. Residues 142–168 show a composition bias toward low complexity; the sequence is GSSVGHPHGHQQQQQTCQQPPTHSSTT. K342 participates in a covalent cross-link: Glycyl lysine isopeptide (Lys-Gly) (interchain with G-Cter in smo-1). The segment at 353–400 is disordered; it reads QRDDDDEDYIPASEARRTSSRLNRKSATPTYLRRRDSERSWTPASDDY. The bZIP domain maps to 420–483; that stretch reads DEETDRRRML…NSMKKELRKM (64 aa). The basic motif stretch occupies residues 425–460; it reads RRRMLNRIAAVRYREKKRAEKKGRKMEFQEVADRNR. The Nuclear localization signal motif lies at 436–441; it reads RYREKK. Residues 462–469 are leucine-zipper; it reads LLQKERQL.

Belongs to the bZIP family. In terms of processing, may be desumoylated by ulp-4. In terms of tissue distribution, ubiquitously expressed.

Its subcellular location is the mitochondrion matrix. It is found in the cytoplasm. It localises to the nucleus. Acts as a transcription factor during mitochondrial stress by activating the mitochondrial unfolded protein response (mtUPR). Induces nuclear and mitochondrial gene transcription, including genes coding for mitochondrial chaperones and proteins involved in glycolysis, amino acid catabolism and innate immunity. Following mitochondrial stress, restores mitochondrial respiratory capacity by limiting the transcription of oxidative phosphorylation (OXPHOS) machinery genes and by promoting the assembly of OXPHOS complexes via the up-regulation of chaperone and assembly factor genes. Component of a feedback loop involving atfs-1, atgl-1 and hlh-11. Acts together with flp-7 to negatively regulate the expression of the transcription regulator hlh-11, to promote expression of atgl-1, and thus atgl-1-dependent fat oxidation in response to mitochondrial stress. In addition, functions with hlh-11 to maintain lifespan. Promotes mtDNA maintenance and propagation of deleterious mtDNA. This chain is Stress activated transcription factor atfs-1, found in Caenorhabditis elegans.